We begin with the raw amino-acid sequence, 122 residues long: Small ribosomal subunit protein uS13 (122 aa).

The tract at residues R99–K122 is disordered.

The protein belongs to the universal ribosomal protein uS13 family. Part of the 30S ribosomal subunit. Forms a loose heterodimer with protein S19. Forms two bridges to the 50S subunit in the 70S ribosome.

Located at the top of the head of the 30S subunit, it contacts several helices of the 16S rRNA. In the 70S ribosome it contacts the 23S rRNA (bridge B1a) and protein L5 of the 50S subunit (bridge B1b), connecting the 2 subunits; these bridges are implicated in subunit movement. Contacts the tRNAs in the A and P-sites. This Parvibaculum lavamentivorans (strain DS-1 / DSM 13023 / NCIMB 13966) protein is Small ribosomal subunit protein uS13.